The chain runs to 1913 residues: Protein TIC 214 (1913 aa).

A run of 5 helical transmembrane segments spans residues 18 to 38 (IINSVVVVGLYYGFLTTFSIG), 64 to 84 (FITGQLMMFISIYYAPLHLAL), 124 to 144 (LSIQCVFLTNLIFQLFNHLML), 172 to 192 (VGWLIGHILFMKWVGLVVSWI), and 214 to 234 (LKSAIAQILSIIFFIACVNYL). 3 disordered regions span residues 245–330 (KLNE…ETEE), 707–734 (YTDKNQNRDQDPNPNTDNTTTENDNSDT), and 1605–1652 (EKED…RKKK). Residues 260 to 289 (KESQKSKESEEERDVEKETTSETKETKQEQ) show a composition bias toward basic and acidic residues. The segment covering 303-314 (EKEDPDKIDETE) has biased composition (acidic residues). Residues 315 to 330 (EIRVNGKEKKKDETEE) are compositionally biased toward basic and acidic residues. Low complexity predominate over residues 718 to 729 (PNPNTDNTTTEN).

This sequence belongs to the TIC214 family. In terms of assembly, part of the Tic complex.

It is found in the plastid. Its subcellular location is the chloroplast inner membrane. In terms of biological role, involved in protein precursor import into chloroplasts. May be part of an intermediate translocation complex acting as a protein-conducting channel at the inner envelope. This chain is Protein TIC 214, found in Acorus calamus var. americanus (American sweet flag).